The sequence spans 213 residues: GTP cyclohydrolase 1 (213 aa).

Zn(2+) contacts are provided by cysteine 104, histidine 107, and cysteine 175.

Belongs to the GTP cyclohydrolase I family. In terms of assembly, homomer.

The catalysed reaction is GTP + H2O = 7,8-dihydroneopterin 3'-triphosphate + formate + H(+). It participates in cofactor biosynthesis; 7,8-dihydroneopterin triphosphate biosynthesis; 7,8-dihydroneopterin triphosphate from GTP: step 1/1. This Brucella canis (strain ATCC 23365 / NCTC 10854 / RM-666) protein is GTP cyclohydrolase 1.